Consider the following 462-residue polypeptide: TNF receptor-associated factor family protein DDB_G0267754 (462 aa).

Residues 24–62 (CCVCECLLIEALQCRNGHVACKNCFIKIVKSKKECMTCR) form an RING-type; degenerate zinc finger. The segment at 104 to 127 (KNGNGNEGSSANEIEQPQQPQQQQ) is disordered. 2 consecutive TRAF-type zinc fingers follow at residues 150–217 (SHLK…SHTE) and 214–273 (SHTE…NQLA). The MATH domain occupies 326-449 (MFRGKWVISN…NDTLTINFSI (124 aa)).

Belongs to the TNF receptor-associated factor family. A subfamily.

It localises to the cytoplasm. Probable adapter protein and signal transducer that links members of the tumor necrosis factor receptor family to different signaling pathways by association with the receptor cytoplasmic domain and kinases. The sequence is that of TNF receptor-associated factor family protein DDB_G0267754 from Dictyostelium discoideum (Social amoeba).